A 156-amino-acid chain; its full sequence is S-ribosylhomocysteine lyase (156 aa).

Positions 56, 60, and 123 each coordinate Fe cation.

It belongs to the LuxS family. In terms of assembly, homodimer. Requires Fe cation as cofactor.

The enzyme catalyses S-(5-deoxy-D-ribos-5-yl)-L-homocysteine = (S)-4,5-dihydroxypentane-2,3-dione + L-homocysteine. In terms of biological role, involved in the synthesis of autoinducer 2 (AI-2) which is secreted by bacteria and is used to communicate both the cell density and the metabolic potential of the environment. The regulation of gene expression in response to changes in cell density is called quorum sensing. Catalyzes the transformation of S-ribosylhomocysteine (RHC) to homocysteine (HC) and 4,5-dihydroxy-2,3-pentadione (DPD). The sequence is that of S-ribosylhomocysteine lyase from Staphylococcus epidermidis (strain ATCC 35984 / DSM 28319 / BCRC 17069 / CCUG 31568 / BM 3577 / RP62A).